Consider the following 481-residue polypeptide: WD repeat-containing protein 55 homolog (481 aa).

The segment at 1 to 116 (MHTHNHFKTP…NRDVETNFDL (116 aa)) is disordered. Acidic residues-rich tracts occupy residues 12–23 (DAEEVDDLDDEM), 31–46 (IEQEVLFESDSDDDGF), and 68–81 (DSFDPNAEDSDSDD). WD repeat units lie at residues 144–183 (KLEDFVTDISFHPERNIIALATIIGDVHLYEYANEGNKLI), 188–227 (VHSKACRDVEFTEDGRNLLTCSKDKCVMVTDMETEKLKKL), 231–269 (AHDDAINTLHVLNENLFATGDDAGTVKLWDLRTKQHVFE), 272–311 (QIDDQVTQLLSNEQNTLLLATSADGYLTTFNIPGRKLYVQ), 314–353 (PYEEELNCMGIYRGDSKLVVGTSKGKLYSYNWGSFGYHCD), and 398–437 (QHNMPIEALDVNSTGELLASSSHNNDVRFWNVKYFEDFGD).

This sequence belongs to the WD repeat WDR55 family.

The chain is WD repeat-containing protein 55 homolog from Drosophila ananassae (Fruit fly).